The following is a 153-amino-acid chain: Glucose-6-phosphate 1-dehydrogenase (153 aa).

Residues Arg-21 and Lys-120 each contribute to the NADP(+) site. Lys-120 is a D-glucose 6-phosphate binding site.

It belongs to the glucose-6-phosphate dehydrogenase family.

Its subcellular location is the cytoplasm. It is found in the cytosol. It carries out the reaction D-glucose 6-phosphate + NADP(+) = 6-phospho-D-glucono-1,5-lactone + NADPH + H(+). It participates in carbohydrate degradation; pentose phosphate pathway; D-ribulose 5-phosphate from D-glucose 6-phosphate (oxidative stage): step 1/3. Functionally, cytosolic glucose-6-phosphate dehydrogenase that catalyzes the first and rate-limiting step of the oxidative branch within the pentose phosphate pathway/shunt, an alternative route to glycolysis for the dissimilation of carbohydrates and a major source of reducing power and metabolic intermediates for fatty acid and nucleic acid biosynthetic processes. In Sarcophaga bullata (Grey flesh fly), this protein is Glucose-6-phosphate 1-dehydrogenase (ZW).